The chain runs to 49 residues: Large ribosomal subunit protein bL34 (49 aa).

It belongs to the bacterial ribosomal protein bL34 family.

The chain is Large ribosomal subunit protein bL34 from Sorangium cellulosum (strain So ce56) (Polyangium cellulosum (strain So ce56)).